Here is a 147-residue protein sequence, read N- to C-terminus: Large ribosomal subunit protein uL11 (147 aa).

It belongs to the universal ribosomal protein uL11 family. In terms of assembly, part of the ribosomal stalk of the 50S ribosomal subunit. Interacts with L10 and the large rRNA to form the base of the stalk. L10 forms an elongated spine to which L12 dimers bind in a sequential fashion forming a multimeric L10(L12)X complex. In terms of processing, one or more lysine residues are methylated.

Functionally, forms part of the ribosomal stalk which helps the ribosome interact with GTP-bound translation factors. This is Large ribosomal subunit protein uL11 from Corynebacterium aurimucosum (strain ATCC 700975 / DSM 44827 / CIP 107346 / CN-1) (Corynebacterium nigricans).